The following is a 402-amino-acid chain: Plasminogen activator inhibitor 1 (402 aa).

The first 23 residues, Met1–Ala23, serve as a signal peptide directing secretion. Asn232, Asn288, and Asn352 each carry an N-linked (GlcNAc...) asparagine glycan.

The protein belongs to the serpin family. In terms of assembly, forms a heterodimer with TMPRSS7. Interacts with VTN. Binds LRP1B; binding is followed by internalization and degradation. Interacts with PPP1CB. In complex with PLAU/uPA, interacts with PLAUR/uPAR. Interacts with SORL1 and LRP1, either alone or in complex with PLAU; these interactions are abolished in the presence of LRPAP1/RAP. The ternary complex composed of PLAUR-PLAU-PAI1 also interacts with SORL1. Interacts with PLAT/tPA. Also interacts with SORL1, when complexed to PLAT/tPA.

It is found in the secreted. In terms of biological role, serine protease inhibitor. Inhibits TMPRSS7. Is a primary inhibitor of tissue-type plasminogen activator (PLAT) and urokinase-type plasminogen activator (PLAU). As PLAT inhibitor, it is required for fibrinolysis down-regulation and is responsible for the controlled degradation of blood clots. As PLAU inhibitor, it is involved in the regulation of cell adhesion and spreading. Acts as a regulator of cell migration, independently of its role as protease inhibitor. It is required for stimulation of keratinocyte migration during cutaneous injury repair. It is involved in cellular and replicative senescence. Plays a role in alveolar type 2 cells senescence in the lung. Is involved in the regulation of cementogenic differentiation of periodontal ligament stem cells, and regulates odontoblast differentiation and dentin formation during odontogenesis. The chain is Plasminogen activator inhibitor 1 (SERPINE1) from Sus scrofa (Pig).